Consider the following 342-residue polypeptide: Isopentenyl-diphosphate delta-isomerase (342 aa).

11-12 (RK) is a substrate binding site. FMN-binding positions include S68, 69 to 71 (SMT), S99, and N127. 99 to 101 (SMR) is a substrate binding site. A substrate-binding site is contributed by Q162. E163 provides a ligand contact to Mg(2+). Residues K194, T224, 274–276 (GLK), and 295–296 (AG) contribute to the FMN site.

It belongs to the IPP isomerase type 2 family. As to quaternary structure, homooctamer. Dimer of tetramers. FMN serves as cofactor. The cofactor is NADPH. It depends on Mg(2+) as a cofactor.

It is found in the cytoplasm. The catalysed reaction is isopentenyl diphosphate = dimethylallyl diphosphate. Its function is as follows. Involved in the biosynthesis of isoprenoids. Catalyzes the 1,3-allylic rearrangement of the homoallylic substrate isopentenyl (IPP) to its allylic isomer, dimethylallyl diphosphate (DMAPP). This is Isopentenyl-diphosphate delta-isomerase from Rickettsia akari (strain Hartford).